The following is a 288-amino-acid chain: ATP synthase gamma chain (288 aa).

Belongs to the ATPase gamma chain family. As to quaternary structure, F-type ATPases have 2 components, CF(1) - the catalytic core - and CF(0) - the membrane proton channel. CF(1) has five subunits: alpha(3), beta(3), gamma(1), delta(1), epsilon(1). CF(0) has three main subunits: a, b and c.

It localises to the cell inner membrane. Functionally, produces ATP from ADP in the presence of a proton gradient across the membrane. The gamma chain is believed to be important in regulating ATPase activity and the flow of protons through the CF(0) complex. The polypeptide is ATP synthase gamma chain (Aliivibrio fischeri (strain ATCC 700601 / ES114) (Vibrio fischeri)).